We begin with the raw amino-acid sequence, 429 residues long: Histidinol dehydrogenase (429 aa).

NAD(+)-binding residues include Tyr-130, Gln-191, and Asn-214. The substrate site is built by Ser-237, Gln-259, and His-262. Gln-259 and His-262 together coordinate Zn(2+). Residues Glu-327 and His-328 each act as proton acceptor in the active site. Residues His-328, Asp-361, Glu-415, and His-420 each contribute to the substrate site. Position 361 (Asp-361) interacts with Zn(2+). His-420 is a Zn(2+) binding site.

Belongs to the histidinol dehydrogenase family. Zn(2+) serves as cofactor.

The enzyme catalyses L-histidinol + 2 NAD(+) + H2O = L-histidine + 2 NADH + 3 H(+). It functions in the pathway amino-acid biosynthesis; L-histidine biosynthesis; L-histidine from 5-phospho-alpha-D-ribose 1-diphosphate: step 9/9. Its function is as follows. Catalyzes the sequential NAD-dependent oxidations of L-histidinol to L-histidinaldehyde and then to L-histidine. The sequence is that of Histidinol dehydrogenase from Neisseria gonorrhoeae (strain ATCC 700825 / FA 1090).